The sequence spans 334 residues: Porphobilinogen deaminase (334 aa).

S-(dipyrrolylmethanemethyl)cysteine is present on cysteine 255.

The protein belongs to the HMBS family. Monomer. The cofactor is dipyrromethane.

It carries out the reaction 4 porphobilinogen + H2O = hydroxymethylbilane + 4 NH4(+). The protein operates within porphyrin-containing compound metabolism; protoporphyrin-IX biosynthesis; coproporphyrinogen-III from 5-aminolevulinate: step 2/4. In terms of biological role, tetrapolymerization of the monopyrrole PBG into the hydroxymethylbilane pre-uroporphyrinogen in several discrete steps. The chain is Porphobilinogen deaminase from Burkholderia orbicola (strain MC0-3).